The following is a 332-amino-acid chain: Fructose-1,6-bisphosphatase class 1 (332 aa).

The Mg(2+) site is built by Glu-92, Asp-113, Leu-115, and Asp-116. Substrate is bound by residues 116 to 119 (DGSS), Asn-209, Tyr-242, and Lys-272. Glu-278 provides a ligand contact to Mg(2+).

This sequence belongs to the FBPase class 1 family. As to quaternary structure, homotetramer. Requires Mg(2+) as cofactor.

The protein resides in the cytoplasm. The catalysed reaction is beta-D-fructose 1,6-bisphosphate + H2O = beta-D-fructose 6-phosphate + phosphate. It functions in the pathway carbohydrate biosynthesis; Calvin cycle. The polypeptide is Fructose-1,6-bisphosphatase class 1 (Prosthecochloris aestuarii (strain DSM 271 / SK 413)).